The following is a 223-amino-acid chain: Na(+)-translocating NADH-quinone reductase subunit D (223 aa).

Transmembrane regions (helical) follow at residues 42-62 (TVMAIALTLVTGFSNLFISMI), 66-86 (IPSSIRMIVQMVIIASLVIVV), 103-123 (VFVGLIITNCIVMGRAEAFAM), 131-151 (FFDGIGNGLGYSAMLLVLGFI), and 178-198 (NGLLLLPPSAFFLIGLIIWAL).

This sequence belongs to the NqrDE/RnfAE family. In terms of assembly, composed of six subunits; NqrA, NqrB, NqrC, NqrD, NqrE and NqrF.

It localises to the cell inner membrane. The catalysed reaction is a ubiquinone + n Na(+)(in) + NADH + H(+) = a ubiquinol + n Na(+)(out) + NAD(+). Functionally, NQR complex catalyzes the reduction of ubiquinone-1 to ubiquinol by two successive reactions, coupled with the transport of Na(+) ions from the cytoplasm to the periplasm. NqrA to NqrE are probably involved in the second step, the conversion of ubisemiquinone to ubiquinol. In Pseudomonas paraeruginosa (strain DSM 24068 / PA7) (Pseudomonas aeruginosa (strain PA7)), this protein is Na(+)-translocating NADH-quinone reductase subunit D.